Consider the following 1403-residue polypeptide: DNA-directed RNA polymerase subunit beta' (1403 aa).

Residues Cys-70, Cys-72, Cys-85, and Cys-88 each contribute to the Zn(2+) site. Positions 460, 462, and 464 each coordinate Mg(2+). Cys-814, Cys-888, Cys-895, and Cys-898 together coordinate Zn(2+). Residues 1369–1403 (RRKRRMLEQPESLTADTGTSHYGEDEISESGAATA) are disordered. Residues 1379 to 1388 (ESLTADTGTS) show a composition bias toward polar residues.

Belongs to the RNA polymerase beta' chain family. As to quaternary structure, the RNAP catalytic core consists of 2 alpha, 1 beta, 1 beta' and 1 omega subunit. When a sigma factor is associated with the core the holoenzyme is formed, which can initiate transcription. Requires Mg(2+) as cofactor. Zn(2+) is required as a cofactor.

The catalysed reaction is RNA(n) + a ribonucleoside 5'-triphosphate = RNA(n+1) + diphosphate. DNA-dependent RNA polymerase catalyzes the transcription of DNA into RNA using the four ribonucleoside triphosphates as substrates. This is DNA-directed RNA polymerase subunit beta' from Nitrosococcus oceani (strain ATCC 19707 / BCRC 17464 / JCM 30415 / NCIMB 11848 / C-107).